Here is a 358-residue protein sequence, read N- to C-terminus: MSDSKEPRLQQLGLLEEEQLRGVGFRQTRGYKSLAGCLGHGPLVLQLLSFTLLAGLLVQVSKVPSSLSQGQSKQDAIYQNLTQLKAAVSELSEKSKLQEIYQELTRLKAAVGELPEKSKLQEIYQELTRLKAAVGELPEKSKQQEIYQELTQLKAAVDGLPDRSKQQEIYQELTQLKAAVDGLPDRSKQQEIYQELIQLKAAVERLCRPCPWEWTFFQGNCYFMSNSQRNWHNSITACQEVGAQLVVIKSAEEQNFLQLQSSRSNRFTWMGLSDLNHEGTWQWVDGSPLLPSFKQYWNKGEPNNIGEEDCAEFSGNGWNDDKCNLAKFWICKKSAASCSGDEERLLSPAPTTPNPPPE.

Residues 1–37 (MSDSKEPRLQQLGLLEEEQLRGVGFRQTRGYKSLAGC) lie on the Cytoplasmic side of the membrane. 3 consecutive short sequence motifs (endocytosis signal) follow at residues 14–15 (LL), 16–18 (EEE), and 31–34 (YKSL). A helical; Signal-anchor for type II membrane protein membrane pass occupies residues 38–58 (LGHGPLVLQLLSFTLLAGLLV). Residues 59–358 (QVSKVPSSLS…APTTPNPPPE (300 aa)) are Extracellular-facing. A glycan (N-linked (GlcNAc...) asparagine) is linked at asparagine 80. Repeat copies occupy residues 96-118 (KLQE…PEKS), 119-141 (KLQE…PEKS), 142-164 (KQQE…PDRS), 165-187 (KQQE…PDRS), and 188-211 (KQQE…RPCP). Residues 96–280 (KLQEIYQELT…GLSDLNHEGT (185 aa)) are 5 X approximate tandem repeats. Cystine bridges form between cysteine 210/cysteine 221, cysteine 238/cysteine 331, and cysteine 310/cysteine 323. A C-type lectin domain is found at 217–332 (FQGNCYFMSN…CNLAKFWICK (116 aa)). The Ca(2+) site is built by glutamate 301, asparagine 303, isoleucine 305, glutamate 308, asparagine 319, and aspartate 320. The interval 336 to 358 (ASCSGDEERLLSPAPTTPNPPPE) is disordered.

Homotetramer. Interacts with C1QBP; the interaction is indicative for a C1q:C1QBP:CD209 signaling complex. Interacts with ICAM2 and ICAM3 by binding to mannose-like carbohydrates. Interacts (via C-type lectin domain) with CEACAM1 (via Lewis X moieties); this interaction is regulated by the glycosylation pattern of CEACAM1 on cell types and regulates contact between dendritic cells and neutrophils.

It localises to the membrane. Its function is as follows. Pathogen-recognition receptor expressed on the surface of immature dendritic cells (DCs) and involved in initiation of primary immune response. Thought to mediate the endocytosis of pathogens which are subsequently degraded in lysosomal compartments. The receptor returns to the cell membrane surface and the pathogen-derived antigens are presented to resting T-cells via MHC class II proteins to initiate the adaptive immune response. Probably recognizes in a calcium-dependent manner high mannose N-linked oligosaccharides in a variety of pathogen antigens. In terms of biological role, on DCs it is a high affinity receptor for ICAM2 and ICAM3 by binding to mannose-like carbohydrates. May act as a DC rolling receptor that mediates transendothelial migration of DC presursors from blood to tissues by binding endothelial ICAM2. Seems to regulate DC-induced T-cell proliferation by binding to ICAM3 on T-cells in the immunological synapse formed between DC and T-cells. The chain is CD209 antigen (CD209) from Papio hamadryas (Hamadryas baboon).